The following is a 438-amino-acid chain: Methylenetetrahydrofolate--tRNA-(uracil-5-)-methyltransferase TrmFO (438 aa).

10 to 15 is an FAD binding site; that stretch reads GGGLAG.

Belongs to the MnmG family. TrmFO subfamily. It depends on FAD as a cofactor.

It is found in the cytoplasm. It catalyses the reaction uridine(54) in tRNA + (6R)-5,10-methylene-5,6,7,8-tetrahydrofolate + NADH + H(+) = 5-methyluridine(54) in tRNA + (6S)-5,6,7,8-tetrahydrofolate + NAD(+). The enzyme catalyses uridine(54) in tRNA + (6R)-5,10-methylene-5,6,7,8-tetrahydrofolate + NADPH + H(+) = 5-methyluridine(54) in tRNA + (6S)-5,6,7,8-tetrahydrofolate + NADP(+). Functionally, catalyzes the folate-dependent formation of 5-methyl-uridine at position 54 (M-5-U54) in all tRNAs. This Trichormus variabilis (strain ATCC 29413 / PCC 7937) (Anabaena variabilis) protein is Methylenetetrahydrofolate--tRNA-(uracil-5-)-methyltransferase TrmFO.